The primary structure comprises 168 residues: 3-hydroxyacyl-[acyl-carrier-protein] dehydratase FabZ (168 aa).

Residue His54 is part of the active site.

The protein belongs to the thioester dehydratase family. FabZ subfamily.

It localises to the cytoplasm. The catalysed reaction is a (3R)-hydroxyacyl-[ACP] = a (2E)-enoyl-[ACP] + H2O. Functionally, involved in unsaturated fatty acids biosynthesis. Catalyzes the dehydration of short chain beta-hydroxyacyl-ACPs and long chain saturated and unsaturated beta-hydroxyacyl-ACPs. In Yersinia enterocolitica serotype O:8 / biotype 1B (strain NCTC 13174 / 8081), this protein is 3-hydroxyacyl-[acyl-carrier-protein] dehydratase FabZ.